We begin with the raw amino-acid sequence, 52 residues long: ATP synthase protein 8 (52 aa).

A helical membrane pass occupies residues 7–27 (MKWFLIYFIYLLIFYLFIMLI).

The protein belongs to the ATPase protein 8 family. F-type ATPases have 2 components, CF(1) - the catalytic core - and CF(0) - the membrane proton channel.

The protein resides in the mitochondrion membrane. In terms of biological role, mitochondrial membrane ATP synthase (F(1)F(0) ATP synthase or Complex V) produces ATP from ADP in the presence of a proton gradient across the membrane which is generated by electron transport complexes of the respiratory chain. F-type ATPases consist of two structural domains, F(1) - containing the extramembraneous catalytic core and F(0) - containing the membrane proton channel, linked together by a central stalk and a peripheral stalk. During catalysis, ATP synthesis in the catalytic domain of F(1) is coupled via a rotary mechanism of the central stalk subunits to proton translocation. Part of the complex F(0) domain. Minor subunit located with subunit a in the membrane. The sequence is that of ATP synthase protein 8 (mt:ATPase8) from Apis mellifera ligustica (Common honeybee).